The chain runs to 426 residues: Gamma-glutamyl phosphate reductase (426 aa).

The protein belongs to the gamma-glutamyl phosphate reductase family.

The protein resides in the cytoplasm. It carries out the reaction L-glutamate 5-semialdehyde + phosphate + NADP(+) = L-glutamyl 5-phosphate + NADPH + H(+). It participates in amino-acid biosynthesis; L-proline biosynthesis; L-glutamate 5-semialdehyde from L-glutamate: step 2/2. In terms of biological role, catalyzes the NADPH-dependent reduction of L-glutamate 5-phosphate into L-glutamate 5-semialdehyde and phosphate. The product spontaneously undergoes cyclization to form 1-pyrroline-5-carboxylate. This Ralstonia pickettii (strain 12J) protein is Gamma-glutamyl phosphate reductase.